The chain runs to 104 residues: Large ribosomal subunit protein uL24 (104 aa).

It belongs to the universal ribosomal protein uL24 family. Part of the 50S ribosomal subunit.

One of two assembly initiator proteins, it binds directly to the 5'-end of the 23S rRNA, where it nucleates assembly of the 50S subunit. Its function is as follows. One of the proteins that surrounds the polypeptide exit tunnel on the outside of the subunit. The sequence is that of Large ribosomal subunit protein uL24 from Corynebacterium jeikeium (strain K411).